A 354-amino-acid chain; its full sequence is N-acetyl-gamma-glutamyl-phosphate reductase (354 aa).

Residue Cys156 is part of the active site.

This sequence belongs to the NAGSA dehydrogenase family. Type 1 subfamily.

The protein localises to the cytoplasm. It carries out the reaction N-acetyl-L-glutamate 5-semialdehyde + phosphate + NADP(+) = N-acetyl-L-glutamyl 5-phosphate + NADPH + H(+). Its pathway is amino-acid biosynthesis; L-arginine biosynthesis; N(2)-acetyl-L-ornithine from L-glutamate: step 3/4. In terms of biological role, catalyzes the NADPH-dependent reduction of N-acetyl-5-glutamyl phosphate to yield N-acetyl-L-glutamate 5-semialdehyde. This Bordetella pertussis (strain Tohama I / ATCC BAA-589 / NCTC 13251) protein is N-acetyl-gamma-glutamyl-phosphate reductase.